An 857-amino-acid chain; its full sequence is Putative serine/threonine-protein kinase receptor (857 aa).

A signal peptide spans 1–32; it reads MKGARNIYHHSYMSFLLVFVVMILIHPALSIY. The Extracellular portion of the chain corresponds to 33–446; that stretch reads INTLSSTESL…IAKKRNASGK (414 aa). The 121-residue stretch at 35-155 folds into the Bulb-type lectin domain; sequence TLSSTESLTI…SNNDASEYLW (121 aa). N-linked (GlcNAc...) asparagine glycans are attached at residues N47, N120, N196, N260, N389, and N442. The region spanning 350–433 is the PAN domain; the sequence is CSGDGFTRMK…DGQDLYVRLA (84 aa). Intrachain disulfides connect C380/C405 and C388/C390. The helical transmembrane segment at 447–466 threads the bilayer; the sequence is IISLTVGVSVLLLLIMFCLW. The Cytoplasmic portion of the chain corresponds to 467 to 857; it reads KRKQKRAKAS…QYTCSVIDAR (391 aa). Residues 528–779 form the Protein kinase domain; that stretch reads FSSCNKLGQG…PSIFQPQEVL (252 aa). ATP contacts are provided by residues 534-542 and K556; that span reads LGQGGFGIV. The active-site Proton acceptor is D653.

This sequence belongs to the protein kinase superfamily. Ser/Thr protein kinase family. As to expression, predominantly in the pistil and anther.

The protein resides in the membrane. It carries out the reaction L-seryl-[protein] + ATP = O-phospho-L-seryl-[protein] + ADP + H(+). The catalysed reaction is L-threonyl-[protein] + ATP = O-phospho-L-threonyl-[protein] + ADP + H(+). Involved in sporophytic self-incompatibility system (the inability of flowering plants to achieve self-fertilization), probably acting in combination with S-locus-specific glycoproteins. Interaction with a ligand in the extracellular domain triggers the protein kinase activity of the cytoplasmic domain. The protein is Putative serine/threonine-protein kinase receptor (SRK6) of Brassica oleracea var. viridis (Flowering kale).